A 338-amino-acid polypeptide reads, in one-letter code: Dihydroorotate dehydrogenase (quinone) (338 aa).

Residues 68-72 (AGMDK) and T92 each bind FMN. Residue K72 participates in substrate binding. 117-121 (NRMGF) contacts substrate. FMN is bound by residues S147 and N180. Position 180 (N180) interacts with substrate. S183 (nucleophile) is an active-site residue. Substrate is bound at residue N185. FMN contacts are provided by K214 and T242. 243–244 (NT) is a binding site for substrate. FMN contacts are provided by residues G267, G296, and 317–318 (YT).

This sequence belongs to the dihydroorotate dehydrogenase family. Type 2 subfamily. As to quaternary structure, monomer. Requires FMN as cofactor.

The protein resides in the cell membrane. The enzyme catalyses (S)-dihydroorotate + a quinone = orotate + a quinol. It functions in the pathway pyrimidine metabolism; UMP biosynthesis via de novo pathway; orotate from (S)-dihydroorotate (quinone route): step 1/1. In terms of biological role, catalyzes the conversion of dihydroorotate to orotate with quinone as electron acceptor. In Salinispora arenicola (strain CNS-205), this protein is Dihydroorotate dehydrogenase (quinone).